The chain runs to 509 residues: Lengsin (509 aa).

The tract at residues 1 to 34 is disordered; it reads MNNEEDLLQEDSTRDEGNETEANSMNTLRRTRKK. In terms of domain architecture, GS beta-grasp spans 83 to 177; that stretch reads NRLQFVRFEA…VICDTFTVTG (95 aa). A GS catalytic domain is found at 184 to 509; the sequence is PRYIAKRQLS…ERNKFLEYFI (326 aa).

The protein belongs to the glutamine synthetase family. As to quaternary structure, dodecamer. Interacts with BFSP2 and VIM. In terms of tissue distribution, abundantly expressed in lens.

May act as a component of the cytoskeleton or as a chaperone for the reorganization of intermediate filament proteins during terminal differentiation in the lens. Does not seem to have enzymatic activity. This is Lengsin (LGSN) from Homo sapiens (Human).